The primary structure comprises 245 residues: Ninjurin-A (245 aa).

The Extracellular segment spans residues 1–170; the sequence is MSNLEHITLE…TSSQHPYFYP (170 aa). Residues asparagine 19 and asparagine 28 are each glycosylated (N-linked (GlcNAc...) asparagine). The disordered stretch occupies residues 32–101; that stretch reads HSYGGAIDGR…NVNVNVPNGG (70 aa). A compositionally biased stretch (low complexity) spans 92–101; the sequence is NVNVNVPNGG. A helix alpha1 region spans residues 135–146; sequence KKTLAQGMMDLA. A helix alpha2 region spans residues 149–165; that stretch reads SANANQLRYVLETSSQH. The chain crosses the membrane as a helical span at residues 171 to 191; it reads SLLFISLSIIFQIAVGVGLIL. Residues 192–211 lie on the Cytoplasmic side of the membrane; that stretch reads NGQYNIKNGHDICRANRINN. Residues 212-232 form a helical membrane-spanning segment; it reads YTVSGIFIVTVVNVLISAFTV. Over 233 to 245 the chain is Extracellular; the sequence is DRDTVPALPANTT.

Belongs to the ninjurin family. In terms of assembly, homooligomer. Cleaved by Mmp1 protease to generate the Secreted ninjurin-A form.

The protein localises to the cell membrane. It localises to the secreted. In terms of biological role, effector of non-apoptotic necrotic cell death that mediates plasma membrane rupture (cytolysis): oligomerizes in response to death stimuli and promotes plasma membrane rupture by introducing hydrophilic faces of 2 alpha helices into the hydrophobic membrane, leading to release intracellular molecules that propagate the inflammatory response. Also acts as a homophilic transmembrane adhesion molecule that promotes cell adhesion by mediating homophilic interactions via its extracellular region. Functionally, secreted form generated by cleavage, which acts as a negative regulator of cell adhesion. Promotes the loss of cell adhesion in a cell non-autonomous manner. The protein is Ninjurin-A of Drosophila melanogaster (Fruit fly).